A 191-amino-acid chain; its full sequence is Small ribosomal subunit protein uS5 (191 aa).

The 64-residue stretch at 20-83 (FADRLVAINR…EQAKRQMIRV (64 aa)) folds into the S5 DRBM domain. Residues 158-191 (TSPRMVAQRRGKKVSDILKKDGEPAEAAAEPAEA) are disordered. Positions 170 to 180 (KVSDILKKDGE) are enriched in basic and acidic residues. Positions 182-191 (AEAAAEPAEA) are enriched in low complexity.

Belongs to the universal ribosomal protein uS5 family. As to quaternary structure, part of the 30S ribosomal subunit. Contacts proteins S4 and S8.

Functionally, with S4 and S12 plays an important role in translational accuracy. Located at the back of the 30S subunit body where it stabilizes the conformation of the head with respect to the body. The chain is Small ribosomal subunit protein uS5 from Dinoroseobacter shibae (strain DSM 16493 / NCIMB 14021 / DFL 12).